Consider the following 1237-residue polypeptide: uncharacterized protein (1237 aa).

The region spanning 591–712 is the MHD1 domain; that stretch reads KDMLEIYSDL…IVLSKYTQWT (122 aa). The 121-residue stretch at 786 to 906 folds into the C2 domain; that stretch reads LIEALDVAES…GDYLPREEWF (121 aa). Positions 1014 to 1130 constitute an MHD2 domain; that stretch reads EAAIYELLDY…KPTDFLLQEC (117 aa).

This is an uncharacterized protein from Schizosaccharomyces pombe (strain 972 / ATCC 24843) (Fission yeast).